The primary structure comprises 121 residues: Large ribosomal subunit protein uL14 (121 aa).

It belongs to the universal ribosomal protein uL14 family. As to quaternary structure, part of the 50S ribosomal subunit. Forms a cluster with proteins L3 and L19. In the 70S ribosome, L14 and L19 interact and together make contacts with the 16S rRNA in bridges B5 and B8.

In terms of biological role, binds to 23S rRNA. Forms part of two intersubunit bridges in the 70S ribosome. The chain is Large ribosomal subunit protein uL14 from Prochlorococcus marinus (strain MIT 9515).